Consider the following 377-residue polypeptide: Chaperone protein DnaJ (377 aa).

The region spanning 5–70 is the J domain; that stretch reads DFYEVLGVER…SKRAAYDQYG (66 aa). The CR-type zinc-finger motif lies at 136–214; sequence GTTVTIRVPT…CHGQGRVEEQ (79 aa). 8 residues coordinate Zn(2+): C149, C152, C166, C169, C188, C191, C202, and C205. CXXCXGXG motif repeat units follow at residues 149–156, 166–173, 188–195, and 202–209; these read CKTCNGSG, CTTCGGIG, CPRCHGTG, and CGSCHGQG.

This sequence belongs to the DnaJ family. Homodimer. The cofactor is Zn(2+).

It is found in the cytoplasm. In terms of biological role, participates actively in the response to hyperosmotic and heat shock by preventing the aggregation of stress-denatured proteins and by disaggregating proteins, also in an autonomous, DnaK-independent fashion. Unfolded proteins bind initially to DnaJ; upon interaction with the DnaJ-bound protein, DnaK hydrolyzes its bound ATP, resulting in the formation of a stable complex. GrpE releases ADP from DnaK; ATP binding to DnaK triggers the release of the substrate protein, thus completing the reaction cycle. Several rounds of ATP-dependent interactions between DnaJ, DnaK and GrpE are required for fully efficient folding. Also involved, together with DnaK and GrpE, in the DNA replication of plasmids through activation of initiation proteins. In Pseudomonas paraeruginosa (strain DSM 24068 / PA7) (Pseudomonas aeruginosa (strain PA7)), this protein is Chaperone protein DnaJ.